Here is a 474-residue protein sequence, read N- to C-terminus: Glutamate--tRNA ligase (474 aa).

The 'HIGH' region signature appears at 9–19; that stretch reads PSPTGYLHVGG. A 'KMSKS' region motif is present at residues 240–244; it reads KLSKR. K243 contributes to the ATP binding site.

The protein belongs to the class-I aminoacyl-tRNA synthetase family. Glutamate--tRNA ligase type 1 subfamily. As to quaternary structure, monomer.

The protein resides in the cytoplasm. It catalyses the reaction tRNA(Glu) + L-glutamate + ATP = L-glutamyl-tRNA(Glu) + AMP + diphosphate. In terms of biological role, catalyzes the attachment of glutamate to tRNA(Glu) in a two-step reaction: glutamate is first activated by ATP to form Glu-AMP and then transferred to the acceptor end of tRNA(Glu). This Vibrio parahaemolyticus serotype O3:K6 (strain RIMD 2210633) protein is Glutamate--tRNA ligase.